The following is a 748-amino-acid chain: Transcription factor hmgR (748 aa).

The segment at residues 24–59 (CISCRQRKAKCDLGTGPDGLPLGPPCAKCRREQKPC) is a DNA-binding region (zn(2)-C6 fungal-type). 2 disordered regions span residues 108–142 (SQED…QIDL) and 661–683 (REST…DEHA).

It is found in the nucleus. Transcription factor; part of the L-tyrosine degradation gene cluster that mediates the biosynthesis of the brownish pigment pyomelanin as an alternative melanin. Acts as a transcriptional activator for the genes of the tyrosine degradation cluster. This is Transcription factor hmgR from Aspergillus fumigatus (strain ATCC MYA-4609 / CBS 101355 / FGSC A1100 / Af293) (Neosartorya fumigata).